The primary structure comprises 379 residues: Alcohol dehydrogenase 1 (379 aa).

Positions 47, 49, 69, 99, 102, 105, 113, and 177 each coordinate Zn(2+). 2 residues coordinate an alcohol: threonine 49 and histidine 69. An NAD(+)-binding site is contributed by threonine 49. NAD(+)-binding positions include 202–207 (GLGAVG), aspartate 226, arginine 231, threonine 272, valine 295, 295–297 (VGV), phenylalanine 322, and arginine 372.

It belongs to the zinc-containing alcohol dehydrogenase family. As to quaternary structure, homodimer. Zn(2+) is required as a cofactor.

It is found in the cytoplasm. It carries out the reaction a primary alcohol + NAD(+) = an aldehyde + NADH + H(+). The catalysed reaction is a secondary alcohol + NAD(+) = a ketone + NADH + H(+). This is Alcohol dehydrogenase 1 (ADH1) from Hordeum vulgare (Barley).